The sequence spans 163 residues: Putative pre-16S rRNA nuclease (163 aa).

It belongs to the YqgF nuclease family.

It is found in the cytoplasm. Its function is as follows. Could be a nuclease involved in processing of the 5'-end of pre-16S rRNA. This is Putative pre-16S rRNA nuclease from Chlamydia caviae (strain ATCC VR-813 / DSM 19441 / 03DC25 / GPIC) (Chlamydophila caviae).